The following is a 169-amino-acid chain: Interleukin-36 gamma (169 aa).

Residues 1-17 (MRGTPGDADGGGRAVYQ) constitute a propeptide that is removed on maturation.

The protein belongs to the IL-1 family. In terms of assembly, interacts with cargo receptor TMED10; the interaction mediates the translocation from the cytoplasm into the ERGIC (endoplasmic reticulum-Golgi intermediate compartment) and thereby secretion. N-terminal truncation leads to a dramatic enhancement of its activity (&gt;1000-fold). Proteolytically cleaved by cathepsin CTSG. Highly expressed in tissues containing epithelial cells: skin, lung, stomach and esophagus. Expressed in bronchial epithelial. In skin is expressed only in keratinocytes but not in fibroblasts, endothelial cells or melanocytes. Up-regulated in lesional psoriasis skin. Expressed in monocyte-derived dendritic cells and M1 macrophages.

It is found in the cytoplasm. It localises to the secreted. In terms of biological role, cytokine that binds to and signals through the IL1RL2/IL-36R receptor which in turn activates NF-kappa-B and MAPK signaling pathways in target cells. Part of the IL-36 signaling system that is thought to be present in epithelial barriers and to take part in local inflammatory response; similar to the IL-1 system with which it shares the coreceptor IL1RAP. Seems to be involved in skin inflammatory response by acting on keratinocytes, dendritic cells and indirectly on T-cells to drive tissue infiltration, cell maturation and cell proliferation. In cultured keratinocytes induces the expression of macrophage, T-cell, and neutrophil chemokines, such as CCL3, CCL4, CCL5, CCL2, CCL17, CCL22, CL20, CCL5, CCL2, CCL17, CCL22, CXCL8, CCL20 and CXCL1; also stimulates its own expression and that of the prototypic cutaneous pro-inflammatory parameters TNF-alpha, S100A7/psoriasin and inducible NOS. May play a role in pro-inflammatory responses during particular neutrophilic airway inflammation: activates mitogen-activated protein kinases and NF-kappa B in primary lung fibroblasts, and stimulates the expression of IL-8 and CXCL3 and Th17 chemokine CCL20 in lung fibroblasts. May be involved in the innate immune response to fungal pathogens, such as Aspergillus fumigatus. The protein is Interleukin-36 gamma of Homo sapiens (Human).